The sequence spans 933 residues: Progesterone receptor (933 aa).

Residues 1–164 form an AF3; mediates transcriptional activation region; the sequence is MTELKAKGPR…PATQGVLSPL (164 aa). The interval 1 to 256 is disordered; sequence MTELKAKGPR…AAAGGGAAAV (256 aa). The tract at residues 1-566 is modulating, Pro-Rich; it reads MTELKAKGPR…YSFESLPQKI (566 aa). Serine 20 bears the Phosphoserine mark. Positions 55–59 match the LXXL motif 1 motif; sequence LDGLL. Serine 81 is modified (phosphoserine). An LXXL motif 2 motif is present at residues 115–119; that stretch reads LDTLL. Phosphoserine is present on residues serine 130 and serine 162. A mediates transcriptional transrepression region spans residues 165-305; the sequence is MSRSGCKAGD…LATTMMDFIH (141 aa). Positions 183 to 187 match the Nuclear localization signal motif; the sequence is KVLPR. Phosphoserine occurs at positions 190 and 213. The span at 220–231 shows a compositional bias: acidic residues; that stretch reads EVEEEDGSESEE. The span at 232-246 shows a compositional bias: low complexity; it reads SAGPLLKGKPRALGG. Residue serine 294 is modified to Phosphoserine; by MAPK1. The segment at 331–378 is disordered; the sequence is GGAGAASAFAPPRSSPSASSTPVAVGDFPDCAYPPDAEPKDDAYPLYS. Over residues 335–350 the composition is skewed to low complexity; the sequence is AASAFAPPRSSPSASS. At serine 345 the chain carries Phosphoserine; by MAPK. Residue lysine 388 forms a Glycyl lysine isopeptide (Lys-Gly) (interchain with G-Cter in SUMO); alternate linkage. A Glycyl lysine isopeptide (Lys-Gly) (interchain with G-Cter in ubiquitin); alternate cross-link involves residue lysine 388. At serine 400 the chain carries Phosphoserine; by CDK2. The segment at 415 to 452 is disordered; it reads PDFPLGPPPPLPPRAPPSRPGEAAVTAAPASASVSSAS. Residues 418 to 433 are compositionally biased toward pro residues; it reads PLGPPPPLPPRAPPSR. A compositionally biased stretch (low complexity) spans 434–452; that stretch reads PGEAAVTAAPASASVSSAS. The tract at residues 456–546 is AF1; mediates transcriptional activation; the sequence is STLECILYKA…VYPPYLNYLR (91 aa). A Glycyl lysine isopeptide (Lys-Gly) (interchain with G-Cter in SUMO) cross-link involves residue lysine 531. 2 consecutive NR C4-type zinc fingers follow at residues 567–587 and 603–627; these read CLIC…CGSC and CAGR…LRKC. The segment at residues 567-639 is a DNA-binding region (nuclear receptor); sequence CLICGDEASG…AGMVLGGRKF (73 aa). Serine 676 carries the post-translational modification Phosphoserine. An NR LBD domain is found at 679–913; sequence QDIQLIPPLI…EFPEMMSEVI (235 aa). The segment at 687-933 is AF2; mediates transcriptional activation; sequence LINLLMSIEP…MVKPLLFHKK (247 aa). Residue arginine 766 coordinates progesterone.

The protein belongs to the nuclear hormone receptor family. In terms of assembly, interacts with SMARD1 and UNC45A. Interacts with CUEDC2; the interaction promotes ubiquitination, decreases sumoylation, and represses transcriptional activity. Interacts with PIAS3; the interaction promotes sumoylation of PR in a hormone-dependent manner, inhibits DNA-binding, and alters nuclear export. Interacts with SP1; the interaction requires ligand-induced phosphorylation on Ser-345 by ERK1/2-MAPK. Interacts with PRMT2. Interacts with NCOA2 and NCOA1. Interacts with KLF9. Interacts with GTF2B. Post-translationally, phosphorylated on multiple serine sites. Several of these sites are hormone-dependent. Phosphorylation on Ser-294 is highly hormone-dependent and modulates ubiquitination and sumoylation on Lys-388. Phosphorylation on Ser-102 and Ser-345 also requires induction by hormone. Basal phosphorylation on Ser-81, Ser-162, Ser-190 and Ser-400 is increased in response to progesterone and can be phosphorylated in vitro by the CDK2-A1 complex. Increased levels of phosphorylation on Ser-400 also in the presence of EGF, heregulin, IGF, PMA and FBS. Phosphorylation at this site by CDK2 is ligand-independent, and increases nuclear translocation and transcriptional activity. Phosphorylation at Ser-162 and Ser-294, but not at Ser-190, is impaired during the G(2)/M phase of the cell cycle. Phosphorylation on Ser-345 by ERK1/2 MAPK is required for interaction with SP1. In terms of processing, sumoylation is hormone-dependent and represses transcriptional activity. Sumoylation on all three sites is enhanced by PIAS3. Desumoylated by SENP1. Sumoylation on Lys-388, the main site of sumoylation, is repressed by ubiquitination on the same site, and modulated by phosphorylation at Ser-294. Ubiquitination is hormone-dependent and represses sumoylation on the same site. Promoted by MAPK-mediated phosphorylation on Ser-294. Ubiquitinated by UBR5, leading to its degradation: UBR5 specifically recognizes and binds ligand-bound PGR when it is not associated with coactivators (NCOAs). In presence of NCOAs, the UBR5-degron is not accessible, preventing its ubiquitination and degradation. Post-translationally, palmitoylated by ZDHHC7 and ZDHHC21. Palmitoylation is required for plasma membrane targeting and for rapid intracellular signaling via ERK and AKT kinases and cAMP generation.

The protein resides in the nucleus. It is found in the cytoplasm. Its function is as follows. The steroid hormones and their receptors are involved in the regulation of eukaryotic gene expression and affect cellular proliferation and differentiation in target tissues. Transcriptional activator of several progesteron-dependent promoters in a variety of cell types. Involved in activation of SRC-dependent MAPK signaling on hormone stimulation. This is Progesterone receptor (PGR) from Pan paniscus (Pygmy chimpanzee).